Consider the following 412-residue polypeptide: Serine hydroxymethyltransferase (412 aa).

(6S)-5,6,7,8-tetrahydrofolate contacts are provided by residues Leu-116 and 120–122 (GHL). Lys-225 is subject to N6-(pyridoxal phosphate)lysine. (6S)-5,6,7,8-tetrahydrofolate-binding positions include Glu-241 and 350–352 (SPF).

Belongs to the SHMT family. As to quaternary structure, homodimer. Requires pyridoxal 5'-phosphate as cofactor.

The protein resides in the cytoplasm. The catalysed reaction is (6R)-5,10-methylene-5,6,7,8-tetrahydrofolate + glycine + H2O = (6S)-5,6,7,8-tetrahydrofolate + L-serine. It participates in one-carbon metabolism; tetrahydrofolate interconversion. The protein operates within amino-acid biosynthesis; glycine biosynthesis; glycine from L-serine: step 1/1. Its function is as follows. Catalyzes the reversible interconversion of serine and glycine with tetrahydrofolate (THF) serving as the one-carbon carrier. This reaction serves as the major source of one-carbon groups required for the biosynthesis of purines, thymidylate, methionine, and other important biomolecules. Also exhibits THF-independent aldolase activity toward beta-hydroxyamino acids, producing glycine and aldehydes, via a retro-aldol mechanism. The chain is Serine hydroxymethyltransferase from Enterococcus faecalis (strain ATCC 700802 / V583).